The sequence spans 372 residues: Chaperone protein DnaJ (372 aa).

Residues 3 to 68 enclose the J domain; the sequence is NLYEILEVNE…EKRKKYDMYG (66 aa). The CR-type zinc-finger motif lies at 130–212; it reads GTKKEISYKK…CKGKGYEIER (83 aa). Zn(2+) is bound by residues Cys143, Cys146, Cys160, Cys163, Cys186, Cys189, Cys200, and Cys203. CXXCXGXG motif repeat units lie at residues 143–150, 160–167, 186–193, and 200–207; these read CHVCNGDG, CEKCHGTG, CDKCHGEG, and CENCKGKG.

It belongs to the DnaJ family. Homodimer. Zn(2+) is required as a cofactor.

Its subcellular location is the cytoplasm. Its function is as follows. Participates actively in the response to hyperosmotic and heat shock by preventing the aggregation of stress-denatured proteins and by disaggregating proteins, also in an autonomous, DnaK-independent fashion. Unfolded proteins bind initially to DnaJ; upon interaction with the DnaJ-bound protein, DnaK hydrolyzes its bound ATP, resulting in the formation of a stable complex. GrpE releases ADP from DnaK; ATP binding to DnaK triggers the release of the substrate protein, thus completing the reaction cycle. Several rounds of ATP-dependent interactions between DnaJ, DnaK and GrpE are required for fully efficient folding. Also involved, together with DnaK and GrpE, in the DNA replication of plasmids through activation of initiation proteins. In Finegoldia magna (strain ATCC 29328 / DSM 20472 / WAL 2508) (Peptostreptococcus magnus), this protein is Chaperone protein DnaJ.